The primary structure comprises 242 residues: Probable septum site-determining protein MinC (242 aa).

This sequence belongs to the MinC family. As to quaternary structure, interacts with MinD and FtsZ.

Cell division inhibitor that blocks the formation of polar Z ring septums. Rapidly oscillates between the poles of the cell to destabilize FtsZ filaments that have formed before they mature into polar Z rings. Prevents FtsZ polymerization. The chain is Probable septum site-determining protein MinC from Thioalkalivibrio sulfidiphilus (strain HL-EbGR7).